Here is a 403-residue protein sequence, read N- to C-terminus: Dihydroorotase (403 aa).

Residues histidine 48 and histidine 50 each contribute to the Zn(2+) site. Substrate contacts are provided by residues 50–52 (HLR) and asparagine 82. 4 residues coordinate Zn(2+): glutamate 140, histidine 172, histidine 211, and aspartate 277. Aspartate 277 is an active-site residue. Histidine 281 serves as a coordination point for substrate.

This sequence belongs to the metallo-dependent hydrolases superfamily. DHOase family. Class I DHOase subfamily. Zn(2+) is required as a cofactor.

It carries out the reaction (S)-dihydroorotate + H2O = N-carbamoyl-L-aspartate + H(+). The protein operates within pyrimidine metabolism; UMP biosynthesis via de novo pathway; (S)-dihydroorotate from bicarbonate: step 3/3. Catalyzes the reversible cyclization of carbamoyl aspartate to dihydroorotate. This is Dihydroorotase from Archaeoglobus fulgidus (strain ATCC 49558 / DSM 4304 / JCM 9628 / NBRC 100126 / VC-16).